The chain runs to 306 residues: Protoheme IX farnesyltransferase (306 aa).

9 helical membrane-spanning segments follow: residues 28-48 (LGLV…AIML), 53-73 (FLSS…IMAG), 105-125 (ASIL…LFTI), 127-147 (IETG…YSVW), 156-176 (TIIG…AIEP), 182-202 (AWML…ALAI), 227-244 (LSML…FFMQ), 246-266 (LGTV…LLAI), and 283-303 (FVYS…VTLI).

This sequence belongs to the UbiA prenyltransferase family. Protoheme IX farnesyltransferase subfamily. As to quaternary structure, interacts with CtaA.

The protein localises to the cell membrane. It carries out the reaction heme b + (2E,6E)-farnesyl diphosphate + H2O = Fe(II)-heme o + diphosphate. It functions in the pathway porphyrin-containing compound metabolism; heme O biosynthesis; heme O from protoheme: step 1/1. Functionally, converts heme B (protoheme IX) to heme O by substitution of the vinyl group on carbon 2 of heme B porphyrin ring with a hydroxyethyl farnesyl side group. The chain is Protoheme IX farnesyltransferase from Macrococcus caseolyticus (strain JCSC5402) (Macrococcoides caseolyticum).